Here is a 151-residue protein sequence, read N- to C-terminus: Snaclec 3 (151 aa).

The signal sequence occupies residues 1–23 (MGRLVFVSFSLLVVFLSLSGTAA). Cystine bridges form between Cys25–Cys36, Cys53–Cys149, and Cys125–Cys141. Positions 32–150 (YEGHCYKPFN…CGEINPFVCK (119 aa)) constitute a C-type lectin domain.

This sequence belongs to the snaclec family. In terms of assembly, heterodimer; disulfide-linked. In terms of tissue distribution, expressed by the venom gland.

Its subcellular location is the secreted. Its function is as follows. Interferes with one step of hemostasis (modulation of platelet aggregation, or coagulation cascade, for example). This is Snaclec 3 from Sistrurus catenatus edwardsii (Desert massasauga).